The primary structure comprises 375 residues: MKRDLYETLGVQKSADEKELKSAFRKLAMKYHPDRNPGDNEAEKSFKEINEAYETLKDPQKRAAYDRYGHAAFEQGGMGNGFAGGGAHGFSDIFEDIFGEMMGGRQRRSSGGRERGADLRYNMEISLEEAYSGKTAQIRVPTSITCDVCTGTGAKPGTSPKTCGTCQGTGRVRAAQGFFSIERTCPTCGGRGQTITDPCTKCHGQGRVVEERTLSVNIPAGIEDGTRIRLSGEGEAGLRGGPAGDLYIFLSVKPHEFYQRDGADLYCAVPISMTTATLGGKFDVTTLDGTKSRVTVPEGTQAGKQFRLKGKGMPVLRSSQMGDLYIQIQIETPQKLTKRQRELLQEFEQISSKENNPESAGFFSRMKGFFDTLSE.

In terms of domain architecture, J spans 4–69; sequence DLYETLGVQK…QKRAAYDRYG (66 aa). Residues 133–211 form a CR-type zinc finger; that stretch reads GKTAQIRVPT…CHGQGRVVEE (79 aa). Residues cysteine 146, cysteine 149, cysteine 163, cysteine 166, cysteine 185, cysteine 188, cysteine 199, and cysteine 202 each contribute to the Zn(2+) site. CXXCXGXG motif repeat units follow at residues 146 to 153, 163 to 170, 185 to 192, and 199 to 206; these read CDVCTGTG, CGTCQGTG, CPTCGGRG, and CTKCHGQG.

Belongs to the DnaJ family. As to quaternary structure, homodimer. It depends on Zn(2+) as a cofactor.

It localises to the cytoplasm. Its function is as follows. Participates actively in the response to hyperosmotic and heat shock by preventing the aggregation of stress-denatured proteins and by disaggregating proteins, also in an autonomous, DnaK-independent fashion. Unfolded proteins bind initially to DnaJ; upon interaction with the DnaJ-bound protein, DnaK hydrolyzes its bound ATP, resulting in the formation of a stable complex. GrpE releases ADP from DnaK; ATP binding to DnaK triggers the release of the substrate protein, thus completing the reaction cycle. Several rounds of ATP-dependent interactions between DnaJ, DnaK and GrpE are required for fully efficient folding. Also involved, together with DnaK and GrpE, in the DNA replication of plasmids through activation of initiation proteins. This Sinorhizobium medicae (strain WSM419) (Ensifer medicae) protein is Chaperone protein DnaJ.